Consider the following 350-residue polypeptide: Probable V-type proton ATPase subunit d 2 (350 aa).

This sequence belongs to the V-ATPase V0D/AC39 subunit family. V-ATPase is a heteromultimeric enzyme made up of two complexes: the ATP-hydrolytic V1 complex and the proton translocation V0 complex. The V1 complex consists of three catalytic AB heterodimers that form a heterohexamer, three peripheral stalks each consisting of EG heterodimers, one central rotor including subunits D and F, and the regulatory subunits C and H. The proton translocation complex V0 consists of the proton transport subunit a, a ring of proteolipid subunits c9c'', rotary subunit d, subunits e and f, and the accessory subunits VhaAC45 and ATP6AP2.

Subunit of the V0 complex of vacuolar(H+)-ATPase (V-ATPase), a multisubunit enzyme composed of a peripheral complex (V1) that hydrolyzes ATP and a membrane integral complex (V0) that translocates protons. V-ATPase is responsible for acidifying and maintaining the pH of intracellular compartments and in some cell types, is targeted to the plasma membrane, where it is responsible for acidifying the extracellular environment. May play a role in coupling of proton transport and ATP hydrolysis. The chain is Probable V-type proton ATPase subunit d 2 (VhaAC39-2) from Drosophila melanogaster (Fruit fly).